Consider the following 288-residue polypeptide: Acetyl-coenzyme A carboxylase carboxyl transferase subunit beta, chloroplastic (288 aa).

In terms of domain architecture, CoA carboxyltransferase N-terminal spans 30 to 288 (LWIKCFDCGL…QILSLHNHSK (259 aa)). Zn(2+) is bound by residues Cys-34, Cys-37, Cys-53, and Cys-56. The C4-type zinc finger occupies 34-56 (CFDCGLLMYSKVLKRNLKVCPQC).

It belongs to the AccD/PCCB family. As to quaternary structure, acetyl-CoA carboxylase is a heterohexamer composed of biotin carboxyl carrier protein, biotin carboxylase and 2 subunits each of ACCase subunit alpha and ACCase plastid-coded subunit beta (accD). Requires Zn(2+) as cofactor.

The protein resides in the plastid. It is found in the chloroplast stroma. It carries out the reaction N(6)-carboxybiotinyl-L-lysyl-[protein] + acetyl-CoA = N(6)-biotinyl-L-lysyl-[protein] + malonyl-CoA. Its pathway is lipid metabolism; malonyl-CoA biosynthesis; malonyl-CoA from acetyl-CoA: step 1/1. Component of the acetyl coenzyme A carboxylase (ACC) complex. Biotin carboxylase (BC) catalyzes the carboxylation of biotin on its carrier protein (BCCP) and then the CO(2) group is transferred by the transcarboxylase to acetyl-CoA to form malonyl-CoA. The sequence is that of Acetyl-coenzyme A carboxylase carboxyl transferase subunit beta, chloroplastic from Pyropia yezoensis (Susabi-nori).